Reading from the N-terminus, the 302-residue chain is tRNA demethylase abh1 (302 aa).

Residues W142 and 149 to 151 (YDW) contribute to the substrate site. The region spanning 187 to 299 (KAEAAIVNFY…RVNFNVRQVR (113 aa)) is the Fe2OG dioxygenase domain. 2-oxoglutarate is bound at residue 194–196 (NFY). H205 and D207 together coordinate Fe cation. R235 contacts substrate. A Fe cation-binding site is contributed by H261. 290–296 (RVNFNVR) lines the 2-oxoglutarate pocket.

The protein belongs to the alkB family. The cofactor is Fe(2+).

It localises to the cytoplasm. It is found in the nucleus. It catalyses the reaction an N(1)-methyladenosine in tRNA + 2-oxoglutarate + O2 = an adenosine in tRNA + formaldehyde + succinate + CO2. It carries out the reaction N(1)-methyladenosine(58) in tRNA + 2-oxoglutarate + O2 = adenosine(58) in tRNA + formaldehyde + succinate + CO2. Its function is as follows. Dioxygenase that acts as on nucleic acids, such as DNA and tRNA. Requires molecular oxygen, alpha-ketoglutarate and iron. Mainly acts as a tRNA demethylase by removing N(1)-methyladenine from various tRNAs, with a preference for N(1)-methyladenine at position 58 (m1A58) present on a stem loop structure of tRNAs. Acts as a regulator of translation initiation and elongation. Does not appear to possess DNA repair activity; no activity towards methylated DNA or etheno adducts. Exhibits a weak and unstable DNA lyase activity; this activity is probably not biologically significant and proceeds by a mechanism different from the classical dioxygenase reaction as it does not require 2-oxoglutarate or iron. The protein is tRNA demethylase abh1 (abh1) of Schizosaccharomyces pombe (strain 972 / ATCC 24843) (Fission yeast).